The chain runs to 1188 residues: AT-rich interactive domain-containing protein 5B (1188 aa).

Lys-130 is covalently cross-linked (Glycyl lysine isopeptide (Lys-Gly) (interchain with G-Cter in SUMO2)). Residues 251 to 277 (RPRKKKPCPQRRDSFSGVKDSNNNSDG) are disordered. Phosphoserine is present on Ser-264. The region spanning 318-410 (RADEQAFLVA…LILPYERFIK (93 aa)) is the ARID domain. Residue Lys-336 is modified to N6,N6-dimethyllysine. The tract at residues 412–611 (EEDKPLPPIK…QPPLANQNET (200 aa)) is disordered. Lys-445 is covalently cross-linked (Glycyl lysine isopeptide (Lys-Gly) (interchain with G-Cter in SUMO2)). The span at 446 to 458 (HEIPKSKKEKENA) shows a compositional bias: basic and acidic residues. Residues Lys-494 and Lys-496 each participate in a glycyl lysine isopeptide (Lys-Gly) (interchain with G-Cter in SUMO2) cross-link. Residues 597–609 (SFPTTQPPLANQN) show a composition bias toward polar residues. Glycyl lysine isopeptide (Lys-Gly) (interchain with G-Cter in SUMO2) cross-links involve residues Lys-767, Lys-774, Lys-803, and Lys-810. Disordered stretches follow at residues 846 to 874 (HHLH…PSHR) and 891 to 918 (DKKS…HKPT). Residues 847–866 (HLHNEQTSKYPSRDMYRESE) show a composition bias toward basic and acidic residues. Glycyl lysine isopeptide (Lys-Gly) (interchain with G-Cter in SUMO2) cross-links involve residues Lys-893, Lys-916, Lys-920, and Lys-935. The disordered stretch occupies residues 956–978 (RVSPMTMSGPKKYPESLSRSGKP). Glycyl lysine isopeptide (Lys-Gly) (interchain with G-Cter in SUMO2) cross-links involve residues Lys-988, Lys-1000, and Lys-1013. A disordered region spans residues 1028 to 1070 (ARAVSPLDPSKEVSGKEKASEQESEGSKAAHGGHSGGGSEGHK). Ser-1032 carries the phosphoserine modification. The segment covering 1036–1055 (PSKEVSGKEKASEQESEGSK) has biased composition (basic and acidic residues). Residues Lys-1055 and Lys-1070 each participate in a glycyl lysine isopeptide (Lys-Gly) (interchain with G-Cter in SUMO2) cross-link. Ser-1133 is subject to Phosphoserine.

The protein belongs to the ARID5B family. In terms of processing, methylation at Lys-336 prevents DNA-binding. Demethylation by PHF2 promotes recruitment of the PHF2-ARID5B complex to promoters. As to expression, widely expressed, including in liver (at protein level).

Its subcellular location is the nucleus. In terms of biological role, transcription coactivator that binds to the 5'-AATA[CT]-3' core sequence and plays a key role in adipogenesis and liver development. Acts by forming a complex with phosphorylated PHF2, which mediates demethylation at Lys-336, leading to target the PHF2-ARID5B complex to target promoters, where PHF2 mediates demethylation of dimethylated 'Lys-9' of histone H3 (H3K9me2), followed by transcription activation of target genes. The PHF2-ARID5B complex acts as a coactivator of HNF4A in liver. Required for adipogenesis: regulates triglyceride metabolism in adipocytes by regulating expression of adipogenic genes. Overexpression leads to induction of smooth muscle marker genes, suggesting that it may also act as a regulator of smooth muscle cell differentiation and proliferation. Represses the cytomegalovirus enhancer. The sequence is that of AT-rich interactive domain-containing protein 5B (ARID5B) from Homo sapiens (Human).